A 408-amino-acid polypeptide reads, in one-letter code: Two-pore potassium channel 5 (408 aa).

2 disordered regions span residues 1 to 29 (MEPL…SASI) and 58 to 82 (QSVQ…SQTR). Positions 15 to 29 (PIPENPSSSSSSASI) are enriched in low complexity. At 22-115 (SSSSSASITI…TKKPSPVSKS (94 aa)) the chain is on the stromal side. A compositionally biased stretch (acidic residues) spans 63-72 (DKEDQDSDSD). A helical transmembrane segment spans residues 116–136 (IIRQAIFLLIVYLTLGVSIYS). The pore-forming intramembrane region spans 152–171 (DALYFCIVTMCTIGYGDIAP). Residues 178 to 198 (IFAVVFVLFGFGFLDILLSGV) form a helical membrane-spanning segment. At 199 to 248 (VNYVLDLQESMILTGIQTRQHHQHHHHHRFSAKDYIIDFEKGRMRIRMKV) the chain is on the stromal side. The chain crosses the membrane as a helical span at residues 249-269 (CLALCVVVLCIGVGALVLHFV). Positions 276 to 295 (DSVYLSVMSVTTVGYGDRAF) form an intramembrane region, pore-forming. A helical membrane pass occupies residues 302-322 (LFAAVWLLVSTLAVARAFLYL). Over 323–408 (AEARIDRRHR…TLPDLLGDPL (86 aa)) the chain is Stromal. EF-hand domains lie at 339-374 (LNRE…EMGK) and 378-408 (KDID…GDPL). Ca(2+)-binding residues include Asp-352, Glu-363, Asp-391, Asn-393, Lys-397, and Asp-402.

This sequence belongs to the two pore domain potassium channel (TC 1.A.1.7) family. Homodimer. Expressed in hydathodes and the vascular tissues of roots, stems, leaves and flowers.

It localises to the vacuole membrane. Probable voltage-independent potassium-selective tonoplast ion channel. The polypeptide is Two-pore potassium channel 5 (TPK5) (Arabidopsis thaliana (Mouse-ear cress)).